The following is a 439-amino-acid chain: Trigger factor (439 aa).

Residues 175–260 (GDRVTISYRS…VERLSVKDEI (86 aa)) enclose the PPIase FKBP-type domain.

This sequence belongs to the FKBP-type PPIase family. Tig subfamily.

It is found in the cytoplasm. The enzyme catalyses [protein]-peptidylproline (omega=180) = [protein]-peptidylproline (omega=0). Involved in protein export. Acts as a chaperone by maintaining the newly synthesized protein in an open conformation. Functions as a peptidyl-prolyl cis-trans isomerase. This is Trigger factor from Anaplasma phagocytophilum (strain HZ).